We begin with the raw amino-acid sequence, 303 residues long: UDP-3-O-acyl-N-acetylglucosamine deacetylase (303 aa).

Zn(2+) is bound by residues His-78, His-237, and Asp-241. The Proton donor role is filled by His-264.

This sequence belongs to the LpxC family. It depends on Zn(2+) as a cofactor.

It carries out the reaction a UDP-3-O-[(3R)-3-hydroxyacyl]-N-acetyl-alpha-D-glucosamine + H2O = a UDP-3-O-[(3R)-3-hydroxyacyl]-alpha-D-glucosamine + acetate. It participates in glycolipid biosynthesis; lipid IV(A) biosynthesis; lipid IV(A) from (3R)-3-hydroxytetradecanoyl-[acyl-carrier-protein] and UDP-N-acetyl-alpha-D-glucosamine: step 2/6. In terms of biological role, catalyzes the hydrolysis of UDP-3-O-myristoyl-N-acetylglucosamine to form UDP-3-O-myristoylglucosamine and acetate, the committed step in lipid A biosynthesis. The sequence is that of UDP-3-O-acyl-N-acetylglucosamine deacetylase from Pseudomonas fluorescens (strain SBW25).